The primary structure comprises 666 residues: Vicilin-like antimicrobial peptides 2-1 (666 aa).

An N-terminal signal peptide occupies residues 1–27; it reads MAINTSNLCSLLFLLSLFLLSTTVSLA. Disordered stretches follow at residues 161 to 191 and 219 to 254; these read QQKRYEEQQREDEEKYEERMKEEDNKRDPQQ and QQRQHGRGGDMMNPQRGGSGRYEEGEEEQSDNPYYF. Cupin type-1 domains follow at residues 271-410 and 455-625; these read SVLE…EKLR and YNLF…KEVE. Positions 629–655 are disordered; that stretch reads NSQDQSIFFPGPRQHQQQSPRSTKQQQ. Over residues 642–655 the composition is skewed to low complexity; it reads QHQQQSPRSTKQQQ.

The protein belongs to the 7S seed storage protein family.

It is found in the secreted. In terms of biological role, antimicrobial peptides 2b, 2c and 2d have antibacterial and antifungal activity against a range of species. This is Vicilin-like antimicrobial peptides 2-1 from Macadamia integrifolia (Macadamia nut).